A 214-amino-acid polypeptide reads, in one-letter code: Orotate phosphoribosyltransferase (214 aa).

5-phospho-alpha-D-ribose 1-diphosphate is bound at residue Lys26. Position 34 to 35 (34 to 35 (FF)) interacts with orotate. 5-phospho-alpha-D-ribose 1-diphosphate contacts are provided by residues 72–73 (YK), Arg99, Lys100, Lys103, His105, and 124–132 (DDVITAGTA). Thr128 and Arg157 together coordinate orotate.

It belongs to the purine/pyrimidine phosphoribosyltransferase family. PyrE subfamily. As to quaternary structure, homodimer. Requires Mg(2+) as cofactor.

The enzyme catalyses orotidine 5'-phosphate + diphosphate = orotate + 5-phospho-alpha-D-ribose 1-diphosphate. Its pathway is pyrimidine metabolism; UMP biosynthesis via de novo pathway; UMP from orotate: step 1/2. Its function is as follows. Catalyzes the transfer of a ribosyl phosphate group from 5-phosphoribose 1-diphosphate to orotate, leading to the formation of orotidine monophosphate (OMP). In Pseudomonas fluorescens (strain ATCC BAA-477 / NRRL B-23932 / Pf-5), this protein is Orotate phosphoribosyltransferase.